The primary structure comprises 425 residues: Probable aminotransferase tcpI (425 aa).

N6-(pyridoxal phosphate)lysine is present on Lys-256.

The protein belongs to the class-I pyridoxal-phosphate-dependent aminotransferase family. Requires pyridoxal 5'-phosphate as cofactor.

Its pathway is secondary metabolite biosynthesis. Probable aminotransferase; part of the gene cluster that mediates the biosynthesis of an unusual class of epipolythiodioxopiperazines (ETPs) lacking the reactive thiol group important for toxicity. Firstly, L-tyrosine is prenylated by tcpD, before undergoing condensation with L-glycine in a reaction catalyzed by the NRPS tcpP leading to the diketopiperazine (DKP) backbone. Afterwards the alpha-carbon of tyrosine is oxidized by the cytochrome P450 tcpC to form a hydroxyl group. However, in contrast other ETP biosynthesis pathways studied so far, tcpC is not able to bishydroxylate the DKP at both alpha-carbon positions, but hydroxylates the alpha-carbon of the tyrosine part and the nitrogen of the glycine part. The next steps involve an alpha,beta-elimination reaction catalyzed by tcpI, a methylation by the methyltransferase tcpN the action of the four enzyme cascade tcpG/K/J/I. Due to a dysfunctional cytochrome P450 monooxygenase tcpC, the pathway leads to the biosynthesis of probable non-toxic metabolites lacking the reactive thiol group. This Claviceps purpurea (strain 20.1) (Ergot fungus) protein is Probable aminotransferase tcpI.